Consider the following 365-residue polypeptide: Carboxynorspermidine/carboxyspermidine decarboxylase (365 aa).

Lysine 37 carries the post-translational modification N6-(pyridoxal phosphate)lysine. Glutamate 233 and aspartate 269 together coordinate substrate.

The protein belongs to the Orn/Lys/Arg decarboxylase class-II family. NspC subfamily. Homodimer. Requires pyridoxal 5'-phosphate as cofactor.

It is found in the cytoplasm. The enzyme catalyses carboxynorspermidine + H(+) = norspermidine + CO2. It carries out the reaction carboxyspermidine + H(+) = spermidine + CO2. Catalyzes the decarboxylation of carboxynorspermidine and carboxyspermidine. This Herminiimonas arsenicoxydans protein is Carboxynorspermidine/carboxyspermidine decarboxylase.